The primary structure comprises 198 residues: Phosphoheptose isomerase (198 aa).

Positions 36-198 (MARALGADRK…DRTLFGGPGG (163 aa)) constitute an SIS domain. A substrate-binding site is contributed by 51 to 53 (NGG). The Zn(2+) site is built by H60 and E64. Substrate-binding positions include E64, 93–94 (ND), 119–121 (STS), S124, and Q174. Zn(2+)-binding residues include Q174 and H182.

The protein belongs to the SIS family. GmhA subfamily. In terms of assembly, homotetramer. It depends on Zn(2+) as a cofactor.

The protein resides in the cytoplasm. The catalysed reaction is 2 D-sedoheptulose 7-phosphate = D-glycero-alpha-D-manno-heptose 7-phosphate + D-glycero-beta-D-manno-heptose 7-phosphate. It participates in carbohydrate biosynthesis; D-glycero-D-manno-heptose 7-phosphate biosynthesis; D-glycero-alpha-D-manno-heptose 7-phosphate and D-glycero-beta-D-manno-heptose 7-phosphate from sedoheptulose 7-phosphate: step 1/1. Catalyzes the isomerization of sedoheptulose 7-phosphate in D-glycero-D-manno-heptose 7-phosphate. The chain is Phosphoheptose isomerase from Halorhodospira halophila (strain DSM 244 / SL1) (Ectothiorhodospira halophila (strain DSM 244 / SL1)).